The primary structure comprises 376 residues: Succinyl-diaminopimelate desuccinylase (376 aa).

Zn(2+) is bound at residue histidine 67. Aspartate 69 is a catalytic residue. A Zn(2+)-binding site is contributed by aspartate 100. The active-site Proton acceptor is the glutamate 134. Zn(2+) is bound by residues glutamate 135, glutamate 163, and histidine 349.

This sequence belongs to the peptidase M20A family. DapE subfamily. As to quaternary structure, homodimer. The cofactor is Zn(2+). It depends on Co(2+) as a cofactor.

It carries out the reaction N-succinyl-(2S,6S)-2,6-diaminopimelate + H2O = (2S,6S)-2,6-diaminopimelate + succinate. Its pathway is amino-acid biosynthesis; L-lysine biosynthesis via DAP pathway; LL-2,6-diaminopimelate from (S)-tetrahydrodipicolinate (succinylase route): step 3/3. In terms of biological role, catalyzes the hydrolysis of N-succinyl-L,L-diaminopimelic acid (SDAP), forming succinate and LL-2,6-diaminopimelate (DAP), an intermediate involved in the bacterial biosynthesis of lysine and meso-diaminopimelic acid, an essential component of bacterial cell walls. The chain is Succinyl-diaminopimelate desuccinylase from Proteus mirabilis (strain HI4320).